A 944-amino-acid chain; its full sequence is Proline and serine-rich protein 1 (944 aa).

M1 is subject to N-acetylmethionine. Disordered stretches follow at residues 233 to 285 (PPPY…PVPT), 369 to 396 (PGPS…SEAF), 608 to 633 (KTEP…HGTL), and 912 to 944 (ESYP…SGWQ). The segment covering 248 to 274 (LSNPSKPIQNQTFSTPASQLFSPHGSN) has biased composition (polar residues). The segment covering 275-285 (PSTPAATPVPT) has biased composition (low complexity). Positions 932 to 944 (FSLQPSLSQSGWQ) are enriched in polar residues.

As to quaternary structure, interacts with TET2 and OGT; this interaction mediates TET2 O-GlcNAcylation and stability by promoting the interaction between OGT and TET2. Interacts with KDM6A. Interacts with TET1. Post-translationally, glycosylated. Interaction with OGT leads to GlcNAcylation.

In terms of biological role, mediates OGT interaction with and O-GlcNAcylation of TET2 to control TET2 stabilization at enhancers and CpG islands (CGIs). In Homo sapiens (Human), this protein is Proline and serine-rich protein 1.